A 212-amino-acid chain; its full sequence is B3 domain-containing protein Os04g0386900 (212 aa).

The disordered stretch occupies residues 1–78 (MRAATALPSI…PRPPEPEPEK (78 aa)). Composition is skewed to low complexity over residues 8 to 23 (PSIPSSSSPSPMASDP) and 36 to 46 (DAGAEDPAAVD). Positions 93 to 191 (FTCIMCKSHV…EFRVQVLRAE (99 aa)) form a DNA-binding region, TF-B3.

Its subcellular location is the nucleus. The sequence is that of B3 domain-containing protein Os04g0386900 from Oryza sativa subsp. japonica (Rice).